A 364-amino-acid polypeptide reads, in one-letter code: Dihydroorotate dehydrogenase (quinone) (364 aa).

FMN is bound by residues 61–65 (AGFDK) and T85. K65 is a substrate binding site. Residue 110–114 (NRMGF) participates in substrate binding. 2 residues coordinate FMN: N139 and N170. N170 serves as a coordination point for substrate. S173 serves as the catalytic Nucleophile. N175 provides a ligand contact to substrate. 2 residues coordinate FMN: K214 and A242. Substrate is bound at residue 243 to 244 (NT). Residues G266, G295, and 316-317 (YS) contribute to the FMN site.

Belongs to the dihydroorotate dehydrogenase family. Type 2 subfamily. Monomer. Requires FMN as cofactor.

The protein localises to the cell membrane. It carries out the reaction (S)-dihydroorotate + a quinone = orotate + a quinol. Its pathway is pyrimidine metabolism; UMP biosynthesis via de novo pathway; orotate from (S)-dihydroorotate (quinone route): step 1/1. Catalyzes the conversion of dihydroorotate to orotate with quinone as electron acceptor. The chain is Dihydroorotate dehydrogenase (quinone) from Rhodopseudomonas palustris (strain BisA53).